The following is a 634-amino-acid chain: Lamin tail domain-containing protein 2 (634 aa).

Residues 1 to 44 (MRWLRPAGRRREQESVSGHLGPPAGAPAAPETPTCLPDTTPHPA) form a disordered region. A coiled-coil region spans residues 106 to 169 (SHSQEKLLQN…QKSCLLQLAR (64 aa)). Residues 228–237 (FTNMEPSSKQ) are compositionally biased toward polar residues. Disordered regions lie at residues 228 to 349 (FTNM…TDPD) and 464 to 575 (HRIP…PAEA). Residues 276–287 (SSSGGADSDSSS) show a composition bias toward low complexity. Residues 310–321 (SEQALVQAGSYS) show a composition bias toward polar residues. Over residues 322 to 337 (RDSEDLQKTHSPRHGE) the composition is skewed to basic and acidic residues. One can recognise an LTD domain in the interval 350-468 (HWSPELLQSP…EVLSEHRIPR (119 aa)). Over residues 502–513 (PPRPPRPLRKGR) the composition is skewed to basic residues. A compositionally biased stretch (basic and acidic residues) spans 540–550 (HAREGPARPEN).

In Homo sapiens (Human), this protein is Lamin tail domain-containing protein 2 (LMNTD2).